The following is a 959-amino-acid chain: Alanine--tRNA ligase (959 aa).

Ser-389 is modified (phosphoserine). Residues His-606, His-610, Cys-725, and His-729 each contribute to the Zn(2+) site.

It belongs to the class-II aminoacyl-tRNA synthetase family. As to quaternary structure, monomer. The cofactor is Zn(2+).

The protein localises to the mitochondrion. Its subcellular location is the cytoplasm. It catalyses the reaction tRNA(Ala) + L-alanine + ATP = L-alanyl-tRNA(Ala) + AMP + diphosphate. Its function is as follows. Catalyzes the attachment of alanine to tRNA(Ala) in a two-step reaction: alanine is first activated by ATP to form Ala-AMP and then transferred to the acceptor end of tRNA(Ala). Also edits incorrectly charged tRNA(Ala) via its editing domain. The chain is Alanine--tRNA ligase (ala1) from Schizosaccharomyces pombe (strain 972 / ATCC 24843) (Fission yeast).